Reading from the N-terminus, the 600-residue chain is Melanophilin (600 aa).

The 121-residue stretch at 4–124 (KLDLSKLTDE…IGSLEWYYEH (121 aa)) folds into the RabBD domain. Residues 64–107 (CARCLQPYQLLVNSKRQCLECGLFTCKSCGRVHPEEQGWICDPC) form an FYVE-type zinc finger. Disordered stretches follow at residues 146–277 (QGGA…AELC), 390–465 (EELT…LSEL), 499–541 (TVKP…AKAM), and 553–600 (NSLK…AHQS). Composition is skewed to basic and acidic residues over residues 232–243 (CSEKAAPHKAEG) and 409–420 (KDEKAEPNRDKS). Residues 373–496 (GVRTEADVEE…ESRIAALRAA (124 aa)) adopt a coiled-coil conformation. A compositionally biased stretch (basic and acidic residues) spans 558-569 (QGKDDDSFDRKS).

Binds RAB27A that has been activated by GTP-binding via its N-terminus. Binds MYO5A via its C-terminal coiled coil domain.

Its subcellular location is the cytoplasm. Functionally, rab effector protein involved in melanosome transport. Serves as link between melanosome-bound RAB27A and the motor protein MYO5A. In Homo sapiens (Human), this protein is Melanophilin (MLPH).